A 112-amino-acid polypeptide reads, in one-letter code: Putative pterin-4-alpha-carbinolamine dehydratase (112 aa).

Positions 1-30 (MSDELQSRTCTPCRGDVPPMTKAEAKRQLA) are disordered.

Belongs to the pterin-4-alpha-carbinolamine dehydratase family.

The enzyme catalyses (4aS,6R)-4a-hydroxy-L-erythro-5,6,7,8-tetrahydrobiopterin = (6R)-L-erythro-6,7-dihydrobiopterin + H2O. This Aromatoleum aromaticum (strain DSM 19018 / LMG 30748 / EbN1) (Azoarcus sp. (strain EbN1)) protein is Putative pterin-4-alpha-carbinolamine dehydratase.